The following is a 121-amino-acid chain: Ribosome-binding factor A (121 aa).

The protein belongs to the RbfA family. In terms of assembly, monomer. Binds 30S ribosomal subunits, but not 50S ribosomal subunits or 70S ribosomes.

It localises to the cytoplasm. In terms of biological role, one of several proteins that assist in the late maturation steps of the functional core of the 30S ribosomal subunit. Associates with free 30S ribosomal subunits (but not with 30S subunits that are part of 70S ribosomes or polysomes). Required for efficient processing of 16S rRNA. May interact with the 5'-terminal helix region of 16S rRNA. The chain is Ribosome-binding factor A from Clostridium kluyveri (strain NBRC 12016).